The primary structure comprises 298 residues: uncharacterized protein (298 aa).

This is an uncharacterized protein from Ictalurid herpesvirus 1 (strain Auburn) (IcHV-1).